Reading from the N-terminus, the 174-residue chain is Ubiquitin-fold modifier-conjugating enzyme 1 (174 aa).

Cys119 serves as the catalytic Glycyl thioester intermediate.

This sequence belongs to the ubiquitin-conjugating enzyme family. UFC1 subfamily.

E2-like enzyme which forms an intermediate with UFM1 via a thioester linkage. The polypeptide is Ubiquitin-fold modifier-conjugating enzyme 1 (Arabidopsis thaliana (Mouse-ear cress)).